Reading from the N-terminus, the 182-residue chain is Ribosome maturation factor RimM (182 aa).

The 81-residue stretch at 102–182 (EEGDYYWKDL…TIEVDWDPGF (81 aa)) folds into the PRC barrel domain.

This sequence belongs to the RimM family. Binds ribosomal protein uS19.

The protein resides in the cytoplasm. An accessory protein needed during the final step in the assembly of 30S ribosomal subunit, possibly for assembly of the head region. Essential for efficient processing of 16S rRNA. May be needed both before and after RbfA during the maturation of 16S rRNA. It has affinity for free ribosomal 30S subunits but not for 70S ribosomes. The polypeptide is Ribosome maturation factor RimM (Klebsiella pneumoniae (strain 342)).